A 203-amino-acid chain; its full sequence is Ras-related protein RABD2a (203 aa).

GTP contacts are provided by residues 15-23 (GDSGVGKSC), 33-40 (YVESYIST), 63-67 (DTAGQ), 121-124 (NKSD), and 151-153 (SAK). The Effector region motif lies at 37 to 45 (YISTIGVDF). Positions 176-203 (QPAGNNARPPTVQIRGQPVAQKNGCCST) are disordered. Residues C200 and C201 are each lipidated (S-geranylgeranyl cysteine).

The protein belongs to the small GTPase superfamily. Rab family. Does not interact with GC5.

The protein localises to the golgi apparatus. It is found in the trans-Golgi network membrane. It localises to the golgi apparatus membrane. In terms of biological role, protein transport. Regulator of membrane traffic from the Golgi apparatus towards the endoplasmic reticulum (ER). This is Ras-related protein RABD2a (RABD2A) from Arabidopsis thaliana (Mouse-ear cress).